Reading from the N-terminus, the 254-residue chain is Gamma-glutamyl-gamma-aminobutyrate hydrolase (254 aa).

Residues 16–250 (RNRLKGHATQ…ITAWQHHIAE (235 aa)) enclose the Glutamine amidotransferase type-1 domain. Cys-114 serves as the catalytic Nucleophile. Active-site residues include His-222 and Glu-224.

The protein belongs to the peptidase C26 family.

The enzyme catalyses 4-(gamma-L-glutamylamino)butanoate + H2O = 4-aminobutanoate + L-glutamate. It participates in amine and polyamine degradation; putrescine degradation; 4-aminobutanoate from putrescine: step 4/4. Its function is as follows. Involved in the breakdown of putrescine via hydrolysis of the gamma-glutamyl linkage of gamma-glutamyl-gamma-aminobutyrate. This is Gamma-glutamyl-gamma-aminobutyrate hydrolase (puuD) from Shigella flexneri.